The following is a 209-amino-acid chain: SelT-like protein (209 aa).

The N-terminal stretch at 1-22 is a signal peptide; that stretch reads MDKTQLILLGLPIFLLCSDLFN. A disulfide bridge links C64 with C67.

Belongs to the SelWTH family. SELT subfamily.

The protein is SelT-like protein of Arabidopsis thaliana (Mouse-ear cress).